A 774-amino-acid polypeptide reads, in one-letter code: MEKSNRRKRPSTPHLSCELCRERKIKCDKVDPCNNCVSAGVVCIPVHRPRLPRGVHARRARPMSPTFVPPRAPTPVAGPVPSEKKQTDHSSGAVAAVDDDLRRRVHRLEAVVNSMRAAMQDSSPATVKQVSCEYWGIVGRADEEKSVLNDSYPAPTSSLACNASIPMTVQGQPPFESRPDCFWNNMVGEIEHFGGDVGSSSETKSDDHSSLAPNMPRMGDGGLRFLGLSGNNPTLTWTPVLEGKEMTRQLCQIYLQQVDPIIKILHRPTVEKWMLHGERYLDYPERHVAVDALRSAICYATAASLTDDQCSAIFQRSRSSGIVEDFRRECETALERSGFLVSPSITGLQAFVLYLIARRSEDRGQAAWTLTAVAVRLAKALGLHRERDETFFNQQMRRRLWLTISLMDLQASFSQASEPLISTEEATSTFFLPKHINDSDLDPTMTHEIPDREGLCDTTFALVTYHIQLAGRALNFGTTASPQHKASQQQHAQRFEENALRLLHFCDPESSPYAWFTWHGTQCLVSGARLSALRPLQLPQPSNGSSQPPSSPSPRPQEHNHELLRLALNVLEKAHLMHTDPRGEGFRWYVTMPWHALAVAINECSLSPDVVRIQSAWPTIEACYQLLRRKGVAGQEEAIQRPLEKLICQARDKASPLLQLARSSPTFSLGSSTGTSAAPTPRSRASSTPSDTLSDLSWPTAFSHAPSQLGMELAPVGPVQPFAKLDLDSLLSQFDIQGQPLLAGQIPPVDAELSLRTWEQLMSDIDAESNQLLP.

A DNA-binding region (zn(2)-C6 fungal-type) is located at residues 17–43 (CELCRERKIKCDKVDPCNNCVSAGVVC). 3 disordered regions span residues 61-94 (RPMSPTFVPPRAPTPVAGPVPSEKKQTDHSSGAV), 536-559 (LQLPQPSNGSSQPPSSPSPRPQEH), and 665-697 (PTFSLGSSTGTSAAPTPRSRASSTPSDTLSDLS). Over residues 67 to 78 (FVPPRAPTPVAG) the composition is skewed to pro residues. Residues 536-548 (LQLPQPSNGSSQP) are compositionally biased toward low complexity. The segment covering 665 to 674 (PTFSLGSSTG) has biased composition (polar residues). Residues 675 to 697 (TSAAPTPRSRASSTPSDTLSDLS) are compositionally biased toward low complexity.

The protein resides in the nucleus. Its function is as follows. Transcription factor that specifically regulates the neosartoricin biosynthesis gene cluster. This Aspergillus fumigatus (strain ATCC MYA-4609 / CBS 101355 / FGSC A1100 / Af293) (Neosartorya fumigata) protein is C6 finger domain transcription factor nscR.